An 87-amino-acid polypeptide reads, in one-letter code: uncharacterized protein (87 aa).

Helical transmembrane passes span 10 to 30 (VAFT…FSIG) and 43 to 63 (GYYI…QKVT).

Its subcellular location is the cell membrane. This is an uncharacterized protein from Bacillus subtilis (strain 168).